A 284-amino-acid polypeptide reads, in one-letter code: MLQNEVENFTNLLEQATVYLAPYQEKIIVVKYGGNAMINEDLKKLVMQDILLLNQLGVKVVLVHGGGPEISQGVKLLGKEPQFINGLRVTDQDTINVVLQMLAGKVNKSLVALLKGKGVGLCGIDANMLQCEKLQAEVDYGFVGEIVKVNTQLLELALSANLIPVISTVGVDDQGVAYNINADTVASEIAMALGAAKLVSMTDIAGLLRDRFDESTLIPEVEVSEVQGLIDQGIIAGGMIPKIACCTDFINAGGIEANIIDGRVPHAILVSLFGGKNGTLFYKK.

Residues glycine 66 to glycine 67, arginine 88, and asparagine 179 contribute to the substrate site.

Belongs to the acetylglutamate kinase family. ArgB subfamily.

The protein localises to the cytoplasm. The catalysed reaction is N-acetyl-L-glutamate + ATP = N-acetyl-L-glutamyl 5-phosphate + ADP. It functions in the pathway amino-acid biosynthesis; L-arginine biosynthesis; N(2)-acetyl-L-ornithine from L-glutamate: step 2/4. Functionally, catalyzes the ATP-dependent phosphorylation of N-acetyl-L-glutamate. The polypeptide is Acetylglutamate kinase (Actinobacillus pleuropneumoniae serotype 3 (strain JL03)).